We begin with the raw amino-acid sequence, 394 residues long: Elongation factor Tu 2 (394 aa).

Residues 10 to 204 (KPHVNVGTIG…ALDTYIPEPA (195 aa)) form the tr-type G domain. The G1 stretch occupies residues 19-26 (GHVDHGKT). 19–26 (GHVDHGKT) lines the GTP pocket. Thr26 provides a ligand contact to Mg(2+). The interval 60-64 (GITIN) is G2. Residues 81-84 (DCPG) are G3. Residues 81-85 (DCPGH) and 136-139 (NKCD) contribute to the GTP site. A G4 region spans residues 136–139 (NKCD). Residues 174 to 176 (SAL) are G5.

Belongs to the TRAFAC class translation factor GTPase superfamily. Classic translation factor GTPase family. EF-Tu/EF-1A subfamily. As to quaternary structure, monomer.

It is found in the cytoplasm. It catalyses the reaction GTP + H2O = GDP + phosphate + H(+). Its function is as follows. GTP hydrolase that promotes the GTP-dependent binding of aminoacyl-tRNA to the A-site of ribosomes during protein biosynthesis. This chain is Elongation factor Tu 2, found in Shewanella frigidimarina (strain NCIMB 400).